A 296-amino-acid polypeptide reads, in one-letter code: Phosphoribosylaminoimidazole-succinocarboxamide synthase (296 aa).

This sequence belongs to the SAICAR synthetase family.

It catalyses the reaction 5-amino-1-(5-phospho-D-ribosyl)imidazole-4-carboxylate + L-aspartate + ATP = (2S)-2-[5-amino-1-(5-phospho-beta-D-ribosyl)imidazole-4-carboxamido]succinate + ADP + phosphate + 2 H(+). It functions in the pathway purine metabolism; IMP biosynthesis via de novo pathway; 5-amino-1-(5-phospho-D-ribosyl)imidazole-4-carboxamide from 5-amino-1-(5-phospho-D-ribosyl)imidazole-4-carboxylate: step 1/2. In Thioalkalivibrio sulfidiphilus (strain HL-EbGR7), this protein is Phosphoribosylaminoimidazole-succinocarboxamide synthase.